Here is a 636-residue protein sequence, read N- to C-terminus: Chaperone protein DnaK (636 aa).

A Phosphothreonine; by autocatalysis modification is found at Thr-198. Positions 602-636 (QAEGAQPGGEAAGEASAKDEKVVDADFEEVKDDKK) are disordered. A compositionally biased stretch (acidic residues) spans 626–636 (ADFEEVKDDKK).

This sequence belongs to the heat shock protein 70 family.

In terms of biological role, acts as a chaperone. The polypeptide is Chaperone protein DnaK (Geobacter sulfurreducens (strain ATCC 51573 / DSM 12127 / PCA)).